Consider the following 668-residue polypeptide: Protein-glutamine gamma-glutamyltransferase (668 aa).

Residues Met1–Arg6 lie on the Cytoplasmic side of the membrane. A helical transmembrane segment spans residues Val7–Met27. At Pro28–Ala50 the chain is on the periplasmic side. The chain crosses the membrane as a helical span at residues Gly51 to Leu71. Topologically, residues Ser72–Gly74 are cytoplasmic. Residues Ser75 to Val95 traverse the membrane as a helical segment. Residues Glu96–Ala103 are Periplasmic-facing. 2 helical membrane-spanning segments follow: residues Leu104–Phe124 and Leu125–Gln145. At Gln146–Arg158 the chain is on the cytoplasmic side. The helical transmembrane segment at Leu159–Pro179 threads the bilayer. The Periplasmic portion of the chain corresponds to Arg180 to Gly548. Residue Cys404 is the Nucleophile of the active site. Residues His448 and Asp464 contribute to the active site. Residues Leu549–Pro569 traverse the membrane as a helical segment. Residues Trp570–Ala668 are Cytoplasmic-facing.

Belongs to the transglutaminase-like superfamily.

The protein resides in the cell inner membrane. It catalyses the reaction L-glutaminyl-[protein] + L-lysyl-[protein] = [protein]-L-lysyl-N(6)-5-L-glutamyl-[protein] + NH4(+). Functionally, displays transglutaminase activity (TGase) in vitro. Plays a critical role in the viability of P.aeruginosa. Might contribute to an essential function linked to the cell wall. This chain is Protein-glutamine gamma-glutamyltransferase (tgpA), found in Pseudomonas aeruginosa (strain ATCC 15692 / DSM 22644 / CIP 104116 / JCM 14847 / LMG 12228 / 1C / PRS 101 / PAO1).